We begin with the raw amino-acid sequence, 1037 residues long: Guanine nucleotide-binding protein G(s) subunit alpha isoforms XLas (1037 aa).

Disordered regions lie at residues 1 to 105 (MGVR…MPFE), 185 to 224 (APGG…EETM), 283 to 588 (SPSQ…TSGC), and 640 to 666 (PLAE…KKRS). Residues 33–46 (APGAAAPGAGPSPA) show a composition bias toward low complexity. A compositionally biased stretch (basic and acidic residues) spans 343–354 (PDKRERAERPPV). Composition is skewed to low complexity over residues 361–408 (MEGA…GATP) and 416–521 (APAD…PASG). Positions 553–565 (GKSESSRGRRVYY) are enriched in basic and acidic residues. The segment covering 572–583 (SDDDSSGDESDD) has biased composition (acidic residues). Residues 640–660 (PLAEKRRQMRKEALEKRAQKR) show a composition bias toward basic and acidic residues. Residues 641 to 667 (LAEKRRQMRKEALEKRAQKRAEKKRSK) adopt a coiled-coil conformation. The region spanning 682–1037 (CTHRLLLLGA…RMHLRQYELL (356 aa)) is the G-alpha domain. A G1 motif region spans residues 685 to 698 (RLLLLGAGESGKST). 690-698 (GAGESGKST) contacts GTP. S697 serves as a coordination point for Mg(2+). Residues 711–734 (FNGEGGEEDPQAARSNSDGEKATK) form a disordered region. Residues 730–756 (EKATKVQDIKNNLKEAIETIVAAMSNL) are a coiled coil. Residues 839-847 (DLLRCRVLT) form a G2 motif region. Residues 840–847 (LLRCRVLT), 866–870 (DVGGQ), and 935–938 (NKQD) contribute to the GTP site. R844 is subject to ADP-ribosylarginine; by cholera toxin. Residue T847 participates in Mg(2+) binding. Positions 862–871 (FHMFDVGGQR) are G3 motif. A G4 motif region spans residues 931–938 (ILFLNKQD). At S995 the chain carries Phosphoserine. The tract at residues 1007 to 1012 (TCAVDT) is G5 motif. A1009 contacts GTP.

This sequence belongs to the G-alpha family. G(s) subfamily. G proteins are composed of 3 units; alpha, beta and gamma. The alpha chain contains the guanine nucleotide binding site. Interacts through its N-terminal region with ALEX which is produced from the same locus in a different open reading frame. This interaction may inhibit its adenylyl cyclase-stimulating activity. Interacts with MAGED2.

Its subcellular location is the cell membrane. The protein localises to the apical cell membrane. The enzyme catalyses GTP + H2O = GDP + phosphate + H(+). Its function is as follows. Guanine nucleotide-binding proteins (G proteins) function as transducers in numerous signaling pathways controlled by G protein-coupled receptors (GPCRs). The alpha chain contains the guanine nucleotide binding site and alternates between an active, GTP-bound state and an inactive, GDP-bound state. Signaling by an activated GPCR promotes GDP release and GTP binding. The alpha subunit has a low GTPase activity that converts bound GTP to GDP, thereby terminating the signal. Both GDP release and GTP hydrolysis are modulated by numerous regulatory proteins. Signaling involves the activation of adenylyl cyclases, resulting in increased levels of the signaling molecule cAMP. GNAS functions downstream of several GPCRs, including beta-adrenergic receptors. XLas isoforms interact with the same set of receptors as Gnas isoforms. The protein is Guanine nucleotide-binding protein G(s) subunit alpha isoforms XLas (GNAS) of Homo sapiens (Human).